The chain runs to 301 residues: NAD kinase 2 (301 aa).

Residue D77 is the Proton acceptor of the active site. NAD(+)-binding positions include 77–78, R82, 151–152, R162, D181, and 192–197; these read DG, NE, and TAYAFS.

The protein belongs to the NAD kinase family. The cofactor is a divalent metal cation.

The protein localises to the cytoplasm. The enzyme catalyses NAD(+) + ATP = ADP + NADP(+) + H(+). Its function is as follows. Involved in the regulation of the intracellular balance of NAD and NADP, and is a key enzyme in the biosynthesis of NADP. Catalyzes specifically the phosphorylation on 2'-hydroxyl of the adenosine moiety of NAD to yield NADP. The protein is NAD kinase 2 of Streptomyces avermitilis (strain ATCC 31267 / DSM 46492 / JCM 5070 / NBRC 14893 / NCIMB 12804 / NRRL 8165 / MA-4680).